Here is a 524-residue protein sequence, read N- to C-terminus: Probable cytosol aminopeptidase (524 aa).

Mn(2+) is bound by residues lysine 288 and aspartate 293. The active site involves lysine 300. Mn(2+) is bound by residues aspartate 311, aspartate 370, and glutamate 372. Arginine 374 is an active-site residue.

The protein belongs to the peptidase M17 family. Mn(2+) is required as a cofactor.

The protein localises to the cytoplasm. The catalysed reaction is Release of an N-terminal amino acid, Xaa-|-Yaa-, in which Xaa is preferably Leu, but may be other amino acids including Pro although not Arg or Lys, and Yaa may be Pro. Amino acid amides and methyl esters are also readily hydrolyzed, but rates on arylamides are exceedingly low.. The enzyme catalyses Release of an N-terminal amino acid, preferentially leucine, but not glutamic or aspartic acids.. Presumably involved in the processing and regular turnover of intracellular proteins. Catalyzes the removal of unsubstituted N-terminal amino acids from various peptides. The sequence is that of Probable cytosol aminopeptidase (pepA) from Mycobacterium leprae (strain TN).